The chain runs to 74 residues: Delta-stichotoxin-Sgt2a (74 aa).

Residues 1–19 (MNRLIILVFAAVFLTLASA) form the signal peptide. Residues 20–28 (EVSEDVNMA) constitute a propeptide that is removed on maturation. 3 disulfides stabilise this stretch: Cys-34–Cys-71, Cys-36–Cys-64, and Cys-57–Cys-72.

This sequence belongs to the sea anemone sodium channel inhibitory toxin family. Type I subfamily.

Its subcellular location is the secreted. The protein localises to the nematocyst. In terms of biological role, binds specifically to voltage-gated sodium channels (Nav), thereby delaying their inactivation during signal transduction. The sequence is that of Delta-stichotoxin-Sgt2a from Stichodactyla gigantea (Giant carpet anemone).